We begin with the raw amino-acid sequence, 284 residues long: Zinc finger protein ZAT3 (284 aa).

Positions 1-12 (MNNNHSYDDRSF) are enriched in basic and acidic residues. Residues 1–76 (MNNNHSYDDR…KPDPNAPKIT (76 aa)) form a disordered region. Polar residues predominate over residues 18–37 (PSNTSNPNPNLQFALSSSYD). Low complexity predominate over residues 47-62 (TVASSSSSSPKSASKP). C2H2-type zinc fingers lie at residues 77–99 (RPCT…MRCH), 162–184 (FECG…RASH), and 222–244 (HKCN…MRCH).

Interacts (via the EAR motif) with TPL. As to expression, expressed exclusively in pollen.

The protein localises to the nucleus. Its function is as follows. Mediates the regulation of male germ cell division by DUO1. The polypeptide is Zinc finger protein ZAT3 (Arabidopsis thaliana (Mouse-ear cress)).